The chain runs to 504 residues: Maturase K (504 aa).

It belongs to the intron maturase 2 family. MatK subfamily.

It is found in the plastid. Its subcellular location is the chloroplast. Usually encoded in the trnK tRNA gene intron. Probably assists in splicing its own and other chloroplast group II introns. The polypeptide is Maturase K (Guizotia abyssinica (Niger)).